Consider the following 138-residue polypeptide: ATP synthase epsilon chain, chloroplastic (138 aa).

The protein belongs to the ATPase epsilon chain family. As to quaternary structure, F-type ATPases have 2 components, CF(1) - the catalytic core - and CF(0) - the membrane proton channel. CF(1) has five subunits: alpha(3), beta(3), gamma(1), delta(1), epsilon(1). CF(0) has three main subunits: a, b and c.

Its subcellular location is the plastid. It is found in the chloroplast thylakoid membrane. Produces ATP from ADP in the presence of a proton gradient across the membrane. The polypeptide is ATP synthase epsilon chain, chloroplastic (Staurastrum punctulatum (Green alga)).